The sequence spans 278 residues: MANQTPIPVIVNGAAGKMGRETIKAVVQAADMTLMGAVDTNPEYQGKDAGEVAGLNEPTEVPITDQLEPILAYVAGERHLQPGVMVDFTHPDAVYDNVRSAIAYGIRPVVGTTGLSSKQIEQLADFAEKASTGCLIIPNFSIGMVLLQQAAIAASQYFDHVEIIELHHNQKADAPSGTAIQTAQMLAEMGKTFNQPAVKETEKLPGARGSLAGEGIRIHSVRLPGLIAHQEVIFGAPGQIYTLRHDTSDRTAYMPGVLLAIRKVLQLKSLVYGLEKIL.

NAD(+)-binding positions include 13–18 (GAAGKM) and 111–113 (GTT). Catalysis depends on His-167, which acts as the Proton donor/acceptor. His-168 is a (S)-2,3,4,5-tetrahydrodipicolinate binding site. The Proton donor role is filled by Lys-171. (S)-2,3,4,5-tetrahydrodipicolinate is bound at residue 177–178 (GT).

The protein belongs to the DapB family.

The protein localises to the cytoplasm. It catalyses the reaction (S)-2,3,4,5-tetrahydrodipicolinate + NAD(+) + H2O = (2S,4S)-4-hydroxy-2,3,4,5-tetrahydrodipicolinate + NADH + H(+). The catalysed reaction is (S)-2,3,4,5-tetrahydrodipicolinate + NADP(+) + H2O = (2S,4S)-4-hydroxy-2,3,4,5-tetrahydrodipicolinate + NADPH + H(+). The protein operates within amino-acid biosynthesis; L-lysine biosynthesis via DAP pathway; (S)-tetrahydrodipicolinate from L-aspartate: step 4/4. In terms of biological role, catalyzes the conversion of 4-hydroxy-tetrahydrodipicolinate (HTPA) to tetrahydrodipicolinate. This chain is 4-hydroxy-tetrahydrodipicolinate reductase, found in Mastigocladus laminosus (Fischerella sp.).